The chain runs to 292 residues: Phosphatidylserine decarboxylase proenzyme (292 aa).

Residues D92, H149, and S256 each act as charge relay system; for autoendoproteolytic cleavage activity in the active site. S256 (schiff-base intermediate with substrate; via pyruvic acid; for decarboxylase activity) is an active-site residue. S256 is subject to Pyruvic acid (Ser); by autocatalysis.

It belongs to the phosphatidylserine decarboxylase family. PSD-B subfamily. Prokaryotic type I sub-subfamily. Heterodimer of a large membrane-associated beta subunit and a small pyruvoyl-containing alpha subunit. It depends on pyruvate as a cofactor. Post-translationally, is synthesized initially as an inactive proenzyme. Formation of the active enzyme involves a self-maturation process in which the active site pyruvoyl group is generated from an internal serine residue via an autocatalytic post-translational modification. Two non-identical subunits are generated from the proenzyme in this reaction, and the pyruvate is formed at the N-terminus of the alpha chain, which is derived from the carboxyl end of the proenzyme. The autoendoproteolytic cleavage occurs by a canonical serine protease mechanism, in which the side chain hydroxyl group of the serine supplies its oxygen atom to form the C-terminus of the beta chain, while the remainder of the serine residue undergoes an oxidative deamination to produce ammonia and the pyruvoyl prosthetic group on the alpha chain. During this reaction, the Ser that is part of the protease active site of the proenzyme becomes the pyruvoyl prosthetic group, which constitutes an essential element of the active site of the mature decarboxylase.

The protein localises to the cell membrane. The enzyme catalyses a 1,2-diacyl-sn-glycero-3-phospho-L-serine + H(+) = a 1,2-diacyl-sn-glycero-3-phosphoethanolamine + CO2. The protein operates within phospholipid metabolism; phosphatidylethanolamine biosynthesis; phosphatidylethanolamine from CDP-diacylglycerol: step 2/2. Its function is as follows. Catalyzes the formation of phosphatidylethanolamine (PtdEtn) from phosphatidylserine (PtdSer). The chain is Phosphatidylserine decarboxylase proenzyme from Baumannia cicadellinicola subsp. Homalodisca coagulata.